The chain runs to 93 residues: Translation initiation factor IF-1 (93 aa).

An S1-like domain is found at 1–72 (MAKEELIQFE…EKGRLIFRHK (72 aa)). Residues 70–93 (RHKDERPGGPPRSGPPRGGQFRRR) form a disordered region.

Belongs to the IF-1 family. Component of the 30S ribosomal translation pre-initiation complex which assembles on the 30S ribosome in the order IF-2 and IF-3, IF-1 and N-formylmethionyl-tRNA(fMet); mRNA recruitment can occur at any time during PIC assembly.

The protein localises to the cytoplasm. Its function is as follows. One of the essential components for the initiation of protein synthesis. Stabilizes the binding of IF-2 and IF-3 on the 30S subunit to which N-formylmethionyl-tRNA(fMet) subsequently binds. Helps modulate mRNA selection, yielding the 30S pre-initiation complex (PIC). Upon addition of the 50S ribosomal subunit IF-1, IF-2 and IF-3 are released leaving the mature 70S translation initiation complex. This Nitrobacter winogradskyi (strain ATCC 25391 / DSM 10237 / CIP 104748 / NCIMB 11846 / Nb-255) protein is Translation initiation factor IF-1.